Consider the following 275-residue polypeptide: Phosphonoacetaldehyde hydrolase (275 aa).

Aspartate 15 serves as the catalytic Nucleophile. Aspartate 15 and alanine 17 together coordinate Mg(2+). Residue lysine 56 is the Schiff-base intermediate with substrate of the active site. Aspartate 189 serves as a coordination point for Mg(2+).

This sequence belongs to the HAD-like hydrolase superfamily. PhnX family. Homodimer. Mg(2+) is required as a cofactor.

The enzyme catalyses phosphonoacetaldehyde + H2O = acetaldehyde + phosphate + H(+). Involved in phosphonate degradation. The polypeptide is Phosphonoacetaldehyde hydrolase (Pseudomonas entomophila (strain L48)).